The following is a 51-amino-acid chain: U-Asilidin(1)-Eru1a (51 aa).

The signal sequence occupies residues 1–23 (MANYIDVLSFLAIICATVLATLA). 3 cysteine pairs are disulfide-bonded: cysteine 26-cysteine 40, cysteine 33-cysteine 44, and cysteine 39-cysteine 49.

Belongs to the asilidin-1 family. Expressed by the venom gland. The most highly expressed peptides U-Asilidin1-Mar1a is around 3000 times higher expressed in the venom thoracic glands compared to its body tissues.

It is found in the secreted. Induces neurotoxic effect on honeybees, including slow movements, disorientation and paralysis. Since it provokes similar symptoms than omega-atracotoxin, it is probable that it acts in the same way by inhibiting voltage-gated calcium channels. The polypeptide is U-Asilidin(1)-Eru1a (Eutolmus rufibarbis (Golden-tabbed robberfly)).